The chain runs to 388 residues: Mannitol-1-phosphate 5-dehydrogenase (388 aa).

Ala5–Gly16 contacts NAD(+). Lys213 is a catalytic residue.

It belongs to the mannitol dehydrogenase family. In terms of assembly, monomer.

The enzyme catalyses D-mannitol 1-phosphate + NAD(+) = beta-D-fructose 6-phosphate + NADH + H(+). Functionally, catalyzes the NAD(H)-dependent interconversion of D-fructose 6-phosphate and D-mannitol 1-phosphate in the mannitol metabolic pathway. The polypeptide is Mannitol-1-phosphate 5-dehydrogenase (mpdA) (Aspergillus clavatus (strain ATCC 1007 / CBS 513.65 / DSM 816 / NCTC 3887 / NRRL 1 / QM 1276 / 107)).